Consider the following 227-residue polypeptide: MKFAVIVFPGSNCDVDMFHAIKDELGEEVDYVWHDTENLDEYDAILLPGGFSYGDYLRCGAISRFANAMKAVQKAAEQGKPILGVCNGFQILVESGLLPGALIRNENLKFMCRTVQLRVENNETMFTSQYEKDEIINIPIAHGEGNYYCDEATLKQLEENNQIAFRYVENPNGSVSDIAGIVNEKGNVLGMMPHPERAVDELLGGAEGLKVFQSILKQWRETYVVNA.

In terms of domain architecture, Glutamine amidotransferase type-1 spans 3-225 (FAVIVFPGSN…LKQWRETYVV (223 aa)). Cys86 serves as the catalytic Nucleophile. Active-site residues include His194 and Glu196.

Part of the FGAM synthase complex composed of 1 PurL, 1 PurQ and 2 PurS subunits.

It localises to the cytoplasm. The catalysed reaction is N(2)-formyl-N(1)-(5-phospho-beta-D-ribosyl)glycinamide + L-glutamine + ATP + H2O = 2-formamido-N(1)-(5-O-phospho-beta-D-ribosyl)acetamidine + L-glutamate + ADP + phosphate + H(+). It catalyses the reaction L-glutamine + H2O = L-glutamate + NH4(+). The protein operates within purine metabolism; IMP biosynthesis via de novo pathway; 5-amino-1-(5-phospho-D-ribosyl)imidazole from N(2)-formyl-N(1)-(5-phospho-D-ribosyl)glycinamide: step 1/2. Functionally, part of the phosphoribosylformylglycinamidine synthase complex involved in the purines biosynthetic pathway. Catalyzes the ATP-dependent conversion of formylglycinamide ribonucleotide (FGAR) and glutamine to yield formylglycinamidine ribonucleotide (FGAM) and glutamate. The FGAM synthase complex is composed of three subunits. PurQ produces an ammonia molecule by converting glutamine to glutamate. PurL transfers the ammonia molecule to FGAR to form FGAM in an ATP-dependent manner. PurS interacts with PurQ and PurL and is thought to assist in the transfer of the ammonia molecule from PurQ to PurL. The protein is Phosphoribosylformylglycinamidine synthase subunit PurQ of Bacillus cereus (strain B4264).